We begin with the raw amino-acid sequence, 401 residues long: Nodal homolog 3-B (401 aa).

The first 18 residues, 1–18 (MAFLSLFLCLVFSSPLMA), serve as a signal peptide directing secretion. Positions 19–274 (MPPALQGRKA…KVNGFRRLRR (256 aa)) are excised as a propeptide. N-linked (GlcNAc...) asparagine glycosylation is found at N168, N337, and N344. 2 disulfide bridges follow: C299–C365 and C328–C396.

This sequence belongs to the TGF-beta family. Monomer. The propeptide region interacts with bmp4 in a non-covalent manner. Expressed in the dorsal marginal region of late blastula, becoming restricted to the Spemann organizer at the early gastrula stage.

Its subcellular location is the secreted. Exhibits mesoderm-dorsalizing activity and neural-inducing activity, but lacks mesoderm-inducing activity. Regulates the expression of specific mesodermal and neural genes. Induces convergent extension movements at the embryonic midline by activating the fgf signaling pathway to induce t/bra expression in the organizer region. Acts with wnt11 to induce Spemann organizer cells and induce axis formation. The unprocessed protein antagonizes bmp-signaling. This Xenopus tropicalis (Western clawed frog) protein is Nodal homolog 3-B.